A 274-amino-acid chain; its full sequence is Non-structural protein 4 (274 aa).

It belongs to the aquareoviridae NS4 protein family.

This Notemigonus crysoleucas (Golden shiner) protein is Non-structural protein 4 (S7).